The chain runs to 123 residues: MGAPGGKINRPRTELKKKLFKRRRVLNRERRLRHRVVGAVIDQGLITRHHLKKRASSARANITLSGKKRRKLLQQIRLAQKEKTAMEVEAPSKPARTSEPQLKRQKKTKAPQDVEMKDLEDES.

2 disordered regions span residues 1-21 (MGAPGGKINRPRTELKKKLFK) and 82-123 (EKTA…EDES).

This is an uncharacterized protein from Homo sapiens (Human).